A 156-amino-acid chain; its full sequence is S-ribosylhomocysteine lyase (156 aa).

His56, His60, and Cys123 together coordinate Fe cation.

Belongs to the LuxS family. In terms of assembly, homodimer. Fe cation serves as cofactor.

It carries out the reaction S-(5-deoxy-D-ribos-5-yl)-L-homocysteine = (S)-4,5-dihydroxypentane-2,3-dione + L-homocysteine. Its function is as follows. Involved in the synthesis of autoinducer 2 (AI-2) which is secreted by bacteria and is used to communicate both the cell density and the metabolic potential of the environment. The regulation of gene expression in response to changes in cell density is called quorum sensing. Catalyzes the transformation of S-ribosylhomocysteine (RHC) to homocysteine (HC) and 4,5-dihydroxy-2,3-pentadione (DPD). This Staphylococcus aureus (strain Mu3 / ATCC 700698) protein is S-ribosylhomocysteine lyase.